The following is a 284-amino-acid chain: L-ribulose-5-phosphate 3-epimerase UlaE (284 aa).

Belongs to the L-ribulose-5-phosphate 3-epimerase family.

It catalyses the reaction L-ribulose 5-phosphate = L-xylulose 5-phosphate. It participates in cofactor degradation; L-ascorbate degradation; D-xylulose 5-phosphate from L-ascorbate: step 3/4. Functionally, catalyzes the isomerization of L-xylulose-5-phosphate to L-ribulose-5-phosphate. Is involved in the anaerobic L-ascorbate utilization. The chain is L-ribulose-5-phosphate 3-epimerase UlaE from Shigella boydii serotype 18 (strain CDC 3083-94 / BS512).